The following is a 78-amino-acid chain: Large ribosomal subunit protein bL31 (78 aa).

The protein belongs to the bacterial ribosomal protein bL31 family. Type A subfamily. As to quaternary structure, part of the 50S ribosomal subunit.

Functionally, binds the 23S rRNA. The polypeptide is Large ribosomal subunit protein bL31 (Rickettsia prowazekii (strain Madrid E)).